A 466-amino-acid chain; its full sequence is Gamma-glutamylpolyamine synthetase GlnA3 (466 aa).

The GS catalytic domain maps to 127–466 (GRTVLRRIVA…GVAAAYRWKY (340 aa)). Residues Glu151 and Glu153 each contribute to the Mg(2+) site. Glu202 is an ATP binding site. Mg(2+)-binding residues include Glu207 and Glu214. Gly259 lines the L-glutamate pocket. A Mg(2+)-binding site is contributed by His263. Ser267 is an ATP binding site. Arg316 and Arg334 together coordinate L-glutamate. The ATP site is built by Arg334 and Arg339. Glu355 lines the Mg(2+) pocket.

Belongs to the glutamine synthetase family. Requires Mg(2+) as cofactor. Expressed in mycelium.

The catalysed reaction is spermine + L-glutamate + ATP = gamma-L-glutamylspermine + ADP + phosphate + H(+). It carries out the reaction spermidine + L-glutamate + ATP = gamma-L-glutamylspermidine + ADP + phosphate + H(+). The enzyme catalyses putrescine + L-glutamate + ATP = gamma-L-glutamylputrescine + ADP + phosphate + H(+). It catalyses the reaction cadaverine + L-glutamate + ATP = gamma-L-glutamylcadaverine + ADP + phosphate + H(+). It functions in the pathway amine and polyamine degradation; putrescine degradation. It participates in amine and polyamine degradation; spermidine degradation. The protein operates within amine and polyamine degradation; spermine degradation. In terms of biological role, involved in the catabolism of polyamines. Catalyzes the ATP-dependent gamma-glutamylation of polyamines. Substrates include putrescine, cadaverine, spermidine and spermine, with a preference for long-chain polyamines spermidine and spermine. Is not able to compensate for the loss of glutamine synthetases (GSs). No complementation of the L-glutamine auxotrophy of an E.coli glnA mutant. Involved in morphological differentiation and in the production of secondary metabolites. Together with GlnA2, enables survival of S.coelicolor under exposure to high local environmental polyamine concentrations, which is toxic to the cells. In Streptomyces coelicolor (strain ATCC BAA-471 / A3(2) / M145), this protein is Gamma-glutamylpolyamine synthetase GlnA3.